The sequence spans 239 residues: Leucyl/phenylalanyl-tRNA--protein transferase (239 aa).

It belongs to the L/F-transferase family.

It is found in the cytoplasm. The catalysed reaction is N-terminal L-lysyl-[protein] + L-leucyl-tRNA(Leu) = N-terminal L-leucyl-L-lysyl-[protein] + tRNA(Leu) + H(+). It carries out the reaction N-terminal L-arginyl-[protein] + L-leucyl-tRNA(Leu) = N-terminal L-leucyl-L-arginyl-[protein] + tRNA(Leu) + H(+). It catalyses the reaction L-phenylalanyl-tRNA(Phe) + an N-terminal L-alpha-aminoacyl-[protein] = an N-terminal L-phenylalanyl-L-alpha-aminoacyl-[protein] + tRNA(Phe). In terms of biological role, functions in the N-end rule pathway of protein degradation where it conjugates Leu, Phe and, less efficiently, Met from aminoacyl-tRNAs to the N-termini of proteins containing an N-terminal arginine or lysine. This is Leucyl/phenylalanyl-tRNA--protein transferase from Syntrophus aciditrophicus (strain SB).